Here is a 205-residue protein sequence, read N- to C-terminus: Molybdopterin synthase catalytic subunit (205 aa).

The tract at residues 1–36 (MQHPTLQPEVDPNPVVSSSSSSSSSNPLPAHLNPAN) is disordered. Substrate contacts are provided by residues 146-147 (HR), Lys162, and 169-171 (KRE). A disordered region spans residues 179-205 (GEGEGEWRANRDTDSQGNCRGDKVAEG). Positions 183–205 (GEWRANRDTDSQGNCRGDKVAEG) are enriched in basic and acidic residues.

This sequence belongs to the MoaE family. MOCS2B subfamily. Heterotetramer; composed of 2 small (MOCS2A) and 2 large (MOCS2B) subunits.

The protein resides in the cytoplasm. It catalyses the reaction 2 [molybdopterin-synthase sulfur-carrier protein]-C-terminal-Gly-aminoethanethioate + cyclic pyranopterin phosphate + H2O = molybdopterin + 2 [molybdopterin-synthase sulfur-carrier protein]-C-terminal Gly-Gly + 2 H(+). It participates in cofactor biosynthesis; molybdopterin biosynthesis. Catalytic subunit of the molybdopterin synthase complex, a complex that catalyzes the conversion of precursor Z into molybdopterin. Acts by mediating the incorporation of 2 sulfur atoms from thiocarboxylated MOCS2A into precursor Z to generate a dithiolene group. The protein is Molybdopterin synthase catalytic subunit of Ajellomyces capsulatus (strain NAm1 / WU24) (Darling's disease fungus).